The primary structure comprises 303 residues: Coenzyme PQQ synthesis protein B (303 aa).

It belongs to the PqqB family.

It participates in cofactor biosynthesis; pyrroloquinoline quinone biosynthesis. May be involved in the transport of PQQ or its precursor to the periplasm. The chain is Coenzyme PQQ synthesis protein B from Acinetobacter baumannii (strain SDF).